We begin with the raw amino-acid sequence, 255 residues long: H-2 class II histocompatibility antigen, E-U alpha chain (255 aa).

Residues Met-1 to Ala-25 form the signal peptide. The tract at residues Ile-26–Asn-109 is alpha-1. The Extracellular portion of the chain corresponds to Ile-26–Asn-217. Residues Val-110–Trp-203 form an alpha-2 region. The region spanning Pro-112–Glu-204 is the Ig-like C1-type domain. Cys-132 and Cys-188 are disulfide-bonded. An N-linked (GlcNAc...) asparagine glycan is attached at Asn-143. A connecting peptide region spans residues Glu-204–Glu-216. Residues Val-218–Ile-238 traverse the membrane as a helical segment. Topologically, residues Met-239–Leu-255 are cytoplasmic.

The protein belongs to the MHC class II family.

It is found in the membrane. In Mus musculus (Mouse), this protein is H-2 class II histocompatibility antigen, E-U alpha chain (H2-Ea).